Consider the following 357-residue polypeptide: Alanine racemase (357 aa).

K35 (proton acceptor; specific for D-alanine) is an active-site residue. At K35 the chain carries N6-(pyridoxal phosphate)lysine. Residue R130 participates in substrate binding. Y253 acts as the Proton acceptor; specific for L-alanine in catalysis. M302 serves as a coordination point for substrate.

This sequence belongs to the alanine racemase family. The cofactor is pyridoxal 5'-phosphate.

The catalysed reaction is L-alanine = D-alanine. It functions in the pathway amino-acid biosynthesis; D-alanine biosynthesis; D-alanine from L-alanine: step 1/1. In terms of biological role, catalyzes the interconversion of L-alanine and D-alanine. May also act on other amino acids. The protein is Alanine racemase (alr) of Wigglesworthia glossinidia brevipalpis.